Here is a 205-residue protein sequence, read N- to C-terminus: MTKIVRSKYKASRRLGVSLWGDSKDAFNTRNYRPGQHGQNTMIKTSDYGLHLKAKQRLKCHYGRVTEKQFRNIFALAQKMKGNTGENFIGLLESRLDTVVYRMNIAPTIFAARQLVSHGHIKLNGKKADIASIRLKAGDVIEVKESVKQIPLIQESVSKQGQTTPGYLSFDVPSLTGKYLRVPALSDVPYPFEAEVHLVIELYSR.

An S4 RNA-binding domain is found at 94 to 157 (SRLDTVVYRM…KQIPLIQESV (64 aa)).

This sequence belongs to the universal ribosomal protein uS4 family. As to quaternary structure, part of the 30S ribosomal subunit. Contacts protein S5. The interaction surface between S4 and S5 is involved in control of translational fidelity.

Functionally, one of the primary rRNA binding proteins, it binds directly to 16S rRNA where it nucleates assembly of the body of the 30S subunit. In terms of biological role, with S5 and S12 plays an important role in translational accuracy. In Rickettsia conorii (strain ATCC VR-613 / Malish 7), this protein is Small ribosomal subunit protein uS4.